A 1112-amino-acid polypeptide reads, in one-letter code: Rho GTPase-activating protein 7 (1112 aa).

The 68-residue stretch at 37–104 (LAEIEAKEAC…LNKCAVMKLE (68 aa)) folds into the SAM domain. A phosphoserine mark is found at serine 112, serine 115, and serine 155. Disordered regions lie at residues 146-203 (SPKQ…APAR), 318-350 (RSIS…RTRS), 405-459 (PKAL…VSSR), and 512-574 (SDEG…GVGA). Residues 183–193 (VHSTGSLTTHA) are compositionally biased toward polar residues. The interval 296–468 (QLNCVEISAL…RLSIYDNVPG (173 aa)) is focal adhesion-targeting (FAT). Composition is skewed to low complexity over residues 320–348 (ISSS…VTRT) and 409–423 (SNGS…SSVN). Phosphoserine is present on serine 343. Over residues 437-446 (LRRENSSPKE) the composition is skewed to basic and acidic residues. The span at 520 to 532 (ALDSVSPCPSSPK) shows a compositional bias: polar residues. Positions 534–544 (IHLDVDNDRAT) are enriched in basic and acidic residues. Residues 547–556 (DLDSTGNSLN) are compositionally biased toward polar residues. The segment at 635 to 657 (KHGFSWAVPKFMKRIKVPDYKDR) is polybasic cluster (PBR). The 207-residue stretch at 662–868 (VPLTVNVQRT…HMIAECKKLF (207 aa)) folds into the Rho-GAP domain. The START domain maps to 898–1105 (CNDDSADYQH…RDSFSHQNTE (208 aa)).

As to quaternary structure, interacts with EF1A1, facilitates EF1A1 distribution to the membrane periphery and ruffles upon growth factor stimulation and suppresses cell migration. Interacts with tensin TNS1 (via N-terminus); the interaction is decreased by phosphorylation of TNS1. Interacts with TNS3 and PTEN; in resting cells, interacts with TNS3 (via C2 tensin-type domain) but, following growth factor stimulation, TNS3 and PTEN are phosphorylated which leads to weakened interaction with TNS3 and enhanced interaction with PTEN. Interacts (via C-terminus) with tensin TNS4 (via SH2 domain); the interaction is independent of tyrosine phosphorylation of DLC1.

The protein localises to the cytoplasm. Its subcellular location is the cell junction. It localises to the focal adhesion. It is found in the membrane. Functions as a GTPase-activating protein for the small GTPases RHOA, RHOB, RHOC and CDC42, terminating their downstream signaling. This induces morphological changes and detachment through cytoskeletal reorganization, playing a critical role in biological processes such as cell migration and proliferation. Also functions in vivo as an activator of the phospholipase PLCD1. Active DLC1 increases cell migration velocity but reduces directionality. Required for growth factor-induced epithelial cell migration; in resting cells, interacts with TNS3 while PTEN interacts with the p85 regulatory subunit of the PI3K kinase complex but growth factor stimulation induces phosphorylation of TNS3 and PTEN, causing them to change their binding preference so that PTEN interacts with DLC1 and TNS3 interacts with p85. The PTEN-DLC1 complex translocates to the posterior of migrating cells to activate RHOA while the TNS3-p85 complex translocates to the leading edge of migrating cells to promote RAC1 activation. The protein is Rho GTPase-activating protein 7 (DLC1) of Bos taurus (Bovine).